We begin with the raw amino-acid sequence, 603 residues long: Cholinesterase (603 aa).

Residues 1–29 (MQTQHTKVTQTHFLLWILLLCMPFGKSHT) form the signal peptide. N-linked (GlcNAc...) asparagine glycosylation occurs at Asn86. A disulfide bridge links Cys94 with Cys121. N-linked (GlcNAc...) asparagine glycosylation occurs at Asn135. Residue 145-146 (GG) coordinates substrate. Residue Ser227 is the Acyl-ester intermediate of the active site. Ser227 carries the phosphoserine modification. A glycan (N-linked (GlcNAc...) asparagine) is linked at Asn270. Cys281 and Cys292 form a disulfide bridge. Glu354 functions as the Charge relay system in the catalytic mechanism. Asn370 carries an N-linked (GlcNAc...) asparagine glycan. Cys429 and Cys548 are oxidised to a cystine. His467 functions as the Charge relay system in the catalytic mechanism. N-linked (GlcNAc...) asparagine glycans are attached at residues Asn484, Asn510, and Asn515.

Belongs to the type-B carboxylesterase/lipase family. Homotetramer; disulfide-linked. Dimer of dimers. As to expression, present in most cells except erythrocytes.

Its subcellular location is the secreted. It catalyses the reaction an acylcholine + H2O = a carboxylate + choline + H(+). Functionally, esterase with broad substrate specificity. Contributes to the inactivation of the neurotransmitter acetylcholine. Can degrade neurotoxic organophosphate esters. In Mus musculus (Mouse), this protein is Cholinesterase (Bche).